Consider the following 447-residue polypeptide: Tubulin beta-5 chain (447 aa).

Positions 11, 69, 138, 142, 143, 144, 204, and 226 each coordinate GTP. A Mg(2+)-binding site is contributed by E69.

Belongs to the tubulin family. Dimer of alpha and beta chains. A typical microtubule is a hollow water-filled tube with an outer diameter of 25 nm and an inner diameter of 15 nM. Alpha-beta heterodimers associate head-to-tail to form protofilaments running lengthwise along the microtubule wall with the beta-tubulin subunit facing the microtubule plus end conferring a structural polarity. Microtubules usually have 13 protofilaments but different protofilament numbers can be found in some organisms and specialized cells. The cofactor is Mg(2+).

It localises to the cytoplasm. The protein localises to the cytoskeleton. Tubulin is the major constituent of microtubules, a cylinder consisting of laterally associated linear protofilaments composed of alpha- and beta-tubulin heterodimers. Microtubules grow by the addition of GTP-tubulin dimers to the microtubule end, where a stabilizing cap forms. Below the cap, tubulin dimers are in GDP-bound state, owing to GTPase activity of alpha-tubulin. This Triticum aestivum (Wheat) protein is Tubulin beta-5 chain (TUBB5).